A 158-amino-acid chain; its full sequence is MNKTPMTTRGAEKLREELNHLKTVARPRVIEAIAEARAHGDLKENAEYQAAREQQGFIEGRIKEIEAKLANAQIIDVTRLNPGGKVVFGATAEIEDLASGEVVTYQIVGEDEAEIKEGRISVTSPIARALIGKQEGDVATVQAPGGTREYEIVSVRYV.

Residues 49–73 (QAAREQQGFIEGRIKEIEAKLANAQ) adopt a coiled-coil conformation.

It belongs to the GreA/GreB family.

Necessary for efficient RNA polymerase transcription elongation past template-encoded arresting sites. The arresting sites in DNA have the property of trapping a certain fraction of elongating RNA polymerases that pass through, resulting in locked ternary complexes. Cleavage of the nascent transcript by cleavage factors such as GreA or GreB allows the resumption of elongation from the new 3'terminus. GreA releases sequences of 2 to 3 nucleotides. The chain is Transcription elongation factor GreA from Methylococcus capsulatus (strain ATCC 33009 / NCIMB 11132 / Bath).